A 218-amino-acid polypeptide reads, in one-letter code: Eukaryotic translation initiation factor 3 subunit K (218 aa).

The PCI domain maps to 44–205; that stretch reads YDWGANLAVL…NIKTKNITEK (162 aa).

The protein belongs to the eIF-3 subunit K family. Component of the eukaryotic translation initiation factor 3 (eIF-3) complex.

The protein resides in the cytoplasm. Functionally, component of the eukaryotic translation initiation factor 3 (eIF-3) complex, which is involved in protein synthesis of a specialized repertoire of mRNAs and, together with other initiation factors, stimulates binding of mRNA and methionyl-tRNAi to the 40S ribosome. The eIF-3 complex specifically targets and initiates translation of a subset of mRNAs involved in cell proliferation. This Bombyx mori (Silk moth) protein is Eukaryotic translation initiation factor 3 subunit K.